We begin with the raw amino-acid sequence, 219 residues long: Guanylate kinase (219 aa).

One can recognise a Guanylate kinase-like domain in the interval 15-194 (GLMLVISSPS…AFSSVRAIVE (180 aa)). 22–29 (SPSGAGKS) is an ATP binding site.

This sequence belongs to the guanylate kinase family.

The protein localises to the cytoplasm. The enzyme catalyses GMP + ATP = GDP + ADP. Functionally, essential for recycling GMP and indirectly, cGMP. The sequence is that of Guanylate kinase from Rhizobium meliloti (strain 1021) (Ensifer meliloti).